We begin with the raw amino-acid sequence, 391 residues long: Polysialic acid biosynthesis protein P7 (391 aa).

May be involved in the synthesis of polysialic acid (PSA). This Escherichia coli protein is Polysialic acid biosynthesis protein P7 (neuC).